Consider the following 878-residue polypeptide: Phosphoenolpyruvate carboxylase (878 aa).

Residues His138 and Lys544 contribute to the active site.

Belongs to the PEPCase type 1 family. It depends on Mg(2+) as a cofactor.

It carries out the reaction oxaloacetate + phosphate = phosphoenolpyruvate + hydrogencarbonate. Its function is as follows. Forms oxaloacetate, a four-carbon dicarboxylic acid source for the tricarboxylic acid cycle. The sequence is that of Phosphoenolpyruvate carboxylase from Psychromonas ingrahamii (strain DSM 17664 / CCUG 51855 / 37).